Consider the following 290-residue polypeptide: Pyridoxal kinase PdxY (290 aa).

Substrate contacts are provided by residues Ser12 and 47–48 (TQ). Residues Asp114, Glu151, Lys184, and 211–214 (RPLL) contribute to the ATP site. Position 225 (Asp225) interacts with substrate.

Belongs to the pyridoxine kinase family. PdxY subfamily. As to quaternary structure, homodimer. Requires Mg(2+) as cofactor.

It catalyses the reaction pyridoxal + ATP = pyridoxal 5'-phosphate + ADP + H(+). It participates in cofactor metabolism; pyridoxal 5'-phosphate salvage; pyridoxal 5'-phosphate from pyridoxal: step 1/1. Pyridoxal kinase involved in the salvage pathway of pyridoxal 5'-phosphate (PLP). Catalyzes the phosphorylation of pyridoxal to PLP. This chain is Pyridoxal kinase PdxY, found in Pseudomonas entomophila (strain L48).